The following is a 208-amino-acid chain: Protein DEHYDRATION-INDUCED 19 homolog 6 (208 aa).

Residues 151–190 (VDSPRRSEADAEGHGSSSSDDQKRREQGVMDDASKEELEE) are disordered. Basic and acidic residues-rich tracts occupy residues 153–163 (SPRRSEADAEG) and 170–190 (DDQK…ELEE).

It belongs to the Di19 family.

This is Protein DEHYDRATION-INDUCED 19 homolog 6 (DI19-6) from Oryza sativa subsp. japonica (Rice).